The following is a 238-amino-acid chain: Opacity protein opA60 (238 aa).

Ala1 is a signal peptide.

The protein belongs to the opacity porin family.

It localises to the cell outer membrane. In terms of biological role, implicated in a number of adherence functions. OPA proteins are implicated in pathogenesis and are subject to phase variation. The protein is Opacity protein opA60 (opaH) of Neisseria gonorrhoeae.